The sequence spans 609 residues: ATP-dependent lipid A-core flippase (609 aa).

The next 6 helical transmembrane spans lie at 47–67, 88–108, 167–187, 190–210, 279–299, and 305–325; these read LLAA…IYLI, ILML…VGSF, AIIT…VMFV, WQLS…ISII, VIQI…AIFG, and GSSW…AAIL. Residues 47–340 enclose the ABC transmembrane type-1 domain; that stretch reads LLAAIGSIFF…LTKVNVVIQK (294 aa). Residues 372-606 enclose the ABC transporter domain; sequence VTIKDLSFAF…GGLYTRLYQS (235 aa). 404-411 contacts ATP; that stretch reads GKSGSGKT.

Belongs to the ABC transporter superfamily. Lipid exporter (TC 3.A.1.106) family. In terms of assembly, homodimer.

Its subcellular location is the cell inner membrane. The catalysed reaction is ATP + H2O + lipid A-core oligosaccharideSide 1 = ADP + phosphate + lipid A-core oligosaccharideSide 2.. Its function is as follows. Involved in lipopolysaccharide (LPS) biosynthesis. Translocates lipid A-core from the inner to the outer leaflet of the inner membrane. Transmembrane domains (TMD) form a pore in the inner membrane and the ATP-binding domain (NBD) is responsible for energy generation. The polypeptide is ATP-dependent lipid A-core flippase (Francisella tularensis subsp. tularensis (strain FSC 198)).